The sequence spans 705 residues: Lethal(3)malignant brain tumor-like protein 2 (705 aa).

A disordered region spans residues 1–84; the sequence is MEKPPSIEET…GTPRSLDGSG (84 aa). S13 is modified (phosphoserine). The segment covering 15-25 has biased composition (acidic residues); it reads PMEEEEDDDLE. The span at 38-49 shows a compositional bias: low complexity; sequence SSVGSESSSYLE. The segment covering 50 to 60 has biased composition (acidic residues); it reads ESSEAENEDRE. Residue S67 is modified to Phosphoserine. The residue at position 76 (T76) is a Phosphothreonine. The FCS-type zinc-finger motif lies at 81–116; it reads DGSGSEPAVCEMCGIVGTREAFFSKTKRFCSVSCSR. The Zn(2+) site is built by C90, C93, C110, and C114. MBT repeat units lie at residues 179–283, 291–391, 397–500, and 508–604; these read FDWG…LVPP, TDWK…IKMS, MAHH…LTPP, and FNWE…LQPP. S338 carries the phosphoserine modification. K405 is covalently cross-linked (Glycyl lysine isopeptide (Lys-Gly) (interchain with G-Cter in SUMO2)). The tract at residues 608 to 705 is disordered; the sequence is EPATPLKAKE…VENIKQETDD (98 aa). The span at 619–634 shows a compositional bias: basic residues; that stretch reads TKKKKKQFGKKRKRIP. Residues K647, K659, and K675 each participate in a glycyl lysine isopeptide (Lys-Gly) (interchain with G-Cter in SUMO2) cross-link. 3 positions are modified to phosphoserine: S683, S688, and S689. A Glycyl lysine isopeptide (Lys-Gly) (interchain with G-Cter in SUMO1); alternate cross-link involves residue K700. A Glycyl lysine isopeptide (Lys-Gly) (interchain with G-Cter in SUMO2); alternate cross-link involves residue K700.

Part of the E2F6.com-1 complex in G0 phase composed of E2F6, MGA, MAX, TFDP1, CBX3, BAT8, EUHMTASE1, RING1, RNF2, MBLR, BAT8 and YAF2.

The protein resides in the nucleus. Putative Polycomb group (PcG) protein. PcG proteins maintain the transcriptionally repressive state of genes, probably via a modification of chromatin, rendering it heritably changed in its expressibility. Its association with a chromatin-remodeling complex suggests that it may contribute to prevent expression of genes that trigger the cell into mitosis. Binds to monomethylated and dimethylated 'Lys-20' on histone H4. Binds histone H3 peptides that are monomethylated or dimethylated on 'Lys-4', 'Lys-9' or 'Lys-27'. The protein is Lethal(3)malignant brain tumor-like protein 2 (L3MBTL2) of Pongo abelii (Sumatran orangutan).